The primary structure comprises 454 residues: Bleomycin hydrolase (454 aa).

M1 is subject to N-acetylmethionine. Residues C73 and H372 contribute to the active site. Position 391 is an N6-acetyllysine (K391). N396 is an active-site residue.

This sequence belongs to the peptidase C1 family. Homohexamer. Interacts with NUDT12 (via ANK repeats). Expressed at relatively higher levels in the stomach, esophagus, spleen, thymus and testis, and at lower levels in the skin, lung and skeletal muscle.

The protein localises to the cytoplasm. The protein resides in the cytoplasmic granule. The catalysed reaction is Inactivates bleomycin B2 (a cytotoxic glycometallopeptide) by hydrolysis of a carboxyamide bond of beta-aminoalanine, but also shows general aminopeptidase activity. The specificity varies somewhat with source, but amino acid arylamides of Met, Leu and Ala are preferred.. Functionally, the normal physiological role of BLM hydrolase is unknown, but it catalyzes the inactivation of the antitumor drug BLM (a glycopeptide) by hydrolyzing the carboxamide bond of its B-aminoalaninamide moiety thus protecting normal and malignant cells from BLM toxicity. Binds single-stranded DNA with higher affinity than double-stranded DNA. May play an important role in the metabolism of antibiotics. In Rattus norvegicus (Rat), this protein is Bleomycin hydrolase (Blmh).